The sequence spans 273 residues: 2-dehydro-3-deoxyphosphooctonate aldolase (273 aa).

Belongs to the KdsA family.

It is found in the cytoplasm. It carries out the reaction D-arabinose 5-phosphate + phosphoenolpyruvate + H2O = 3-deoxy-alpha-D-manno-2-octulosonate-8-phosphate + phosphate. Its pathway is carbohydrate biosynthesis; 3-deoxy-D-manno-octulosonate biosynthesis; 3-deoxy-D-manno-octulosonate from D-ribulose 5-phosphate: step 2/3. It participates in bacterial outer membrane biogenesis; lipopolysaccharide biosynthesis. The protein is 2-dehydro-3-deoxyphosphooctonate aldolase of Nitratidesulfovibrio vulgaris (strain DP4) (Desulfovibrio vulgaris).